The sequence spans 556 residues: Cytochrome P450 monooxygenase polC (556 aa).

Residues Leu17 to Tyr37 traverse the membrane as a helical segment. A heme-binding site is contributed by Cys479.

The protein belongs to the cytochrome P450 family. Requires heme as cofactor.

Its subcellular location is the membrane. It carries out the reaction motiol + 3 reduced [NADPH--hemoprotein reductase] + 3 O2 = 4beta-carboxyl motiol + 3 oxidized [NADPH--hemoprotein reductase] + 4 H2O + 4 H(+). The protein operates within secondary metabolite biosynthesis; terpenoid biosynthesis. Cytochrome P450 monooxygenase; part of the gene cluster that mediates the biosynthesis of antifungal fernane-type triterpenoid polytolypin. PolC uses motiol as a substrate and converts the methyl group at position C-4 to a carboxyl group. Within the pathway, the triterpene cyclase polA first catalyzes the cyclization of 2,3-oxidosqualene to motiol, polC converts the 4-alpha-methyl group of motiol to a carboxyl group, polB is responsible for appending a hydroxyl group at the 2-alpha position and polE is a dual functional P450, which can catalyze the formation of both the 1-beta-hydroxyl group and 10-beta-carboxyl group. The sequence is that of Cytochrome P450 monooxygenase polC from Polytolypa hystricis (strain UAMH7299).